The chain runs to 420 residues: Protein BDLF2 (420 aa).

Disordered stretches follow at residues 1–21 and 64–129; these read MVDE…SREE and AAAV…GGQR. At 1–184 the chain is on the intravirion side; it reads MVDEQVAVEH…AETLAEPPRC (184 aa). A compositionally biased stretch (low complexity) spans 92–108; it reads TNTQDQNQNQTTRARTN. A helical; Signal-anchor for type II membrane protein membrane pass occupies residues 185 to 205; sequence FMLSFVFIYYCCYLAFLALLA. Over 206-420 the chain is Virion surface; that stretch reads FGFNPLFLPS…LEEVMYVMVQ (215 aa). N-linked (GlcNAc...) asparagine; by host glycosylation is found at asparagine 258, asparagine 264, asparagine 300, asparagine 304, asparagine 371, and asparagine 384.

This sequence belongs to the herpesviridae BDLF2 family. As to quaternary structure, interacts with BMRF2.

The protein resides in the virion membrane. In terms of biological role, rearranges cellular actin to increase intercellular contacts and thereby promote virus cell-to-cell spreading. Induce the outgrowth of long, branched plasma membrane fronds to create intercellular network for virion traffic. The fronds are actin based and RhoA-dependent. This is Protein BDLF2 from Epstein-Barr virus (strain GD1) (HHV-4).